A 276-amino-acid chain; its full sequence is MVLVEFLTGFFYLYGKRLFSISKVMDMICLDYYTIIPAPLAMMLAARLKNYDLMKRLHEWEISVDYALLVVDDVPSIDFCLSLGAKSPTRAQKRELLRDNTFNPVYKYLMNCSGFPTKREKNIPCDVQCERLQKNIIKELVFNCSVLLEMVLHTEREYAYALHCAAKHNQLPILMYCWQQSTDAESILLKTCCSDKNINCFNYCILYGGAQNLDAAMVEAAKHDARMLINYCVMLGGRSLNQAKETAAMFGHIECAQHCFKLQSYVMDTLNVDDTD.

It belongs to the asfivirus MGF 360 family.

In terms of biological role, plays a role in virus cell tropism, and may be required for efficient virus replication in macrophages. The chain is Protein MGF 360-15R from African swine fever virus (isolate Tick/South Africa/Pretoriuskop Pr4/1996) (ASFV).